The following is a 95-amino-acid chain: MSFKPLHDRIAIKPIEQEEKTKGGIIIPDTVKEKPMQGEIVAVGNGIRNEKGEIHPLELKVGDKVLYGKWAGTEIEIKGTKLIVMKESDVFGIIN.

The protein belongs to the GroES chaperonin family. In terms of assembly, heptamer of 7 subunits arranged in a ring. Interacts with the chaperonin GroEL.

The protein localises to the cytoplasm. Together with the chaperonin GroEL, plays an essential role in assisting protein folding. The GroEL-GroES system forms a nano-cage that allows encapsulation of the non-native substrate proteins and provides a physical environment optimized to promote and accelerate protein folding. GroES binds to the apical surface of the GroEL ring, thereby capping the opening of the GroEL channel. The sequence is that of Co-chaperonin GroES from Rickettsia conorii (strain ATCC VR-613 / Malish 7).